The sequence spans 416 residues: Enterobactin exporter EntS (416 aa).

The Cytoplasmic portion of the chain corresponds to 1 to 21 (MNKQSWLLNLSLLKTHPAFRA). The chain crosses the membrane as a helical span at residues 22 to 42 (VFLARFISIVSLGLLGVAVPV). Residues 43 to 55 (QIQMMTHSTWQVG) are Periplasmic-facing. The helical transmembrane segment at 56–76 (LSVTLTGGAMFVGLMVGGVLA) threads the bilayer. Residues 77–83 (DRYERKK) are Cytoplasmic-facing. A helical transmembrane segment spans residues 84–104 (VILLARGTCGIGFIGLCLNAL). Residues 105 to 109 (LPEPS) lie on the Periplasmic side of the membrane. The helical transmembrane segment at 110-130 (LLAIYLLGLWDGFFASLGVTA) threads the bilayer. The Cytoplasmic portion of the chain corresponds to 131 to 156 (LLAATPALVGRENLMQAGAITMLTVR). A helical membrane pass occupies residues 157–177 (LGSVISPMIGGLLLATGGVAW). N178 is a topological domain (periplasmic). A helical transmembrane segment spans residues 179–199 (YGLAAAGTFITLLPLLSLPAL). Residues 200 to 218 (PPPPQPREHPLKSLLAGFR) are Cytoplasmic-facing. The helical transmembrane segment at 219-239 (FLLASPLVGGIALLGGLLTMA) threads the bilayer. Residues 240–256 (SAVRVLYPALADNWQMS) are Periplasmic-facing. A helical transmembrane segment spans residues 257–277 (AAQIGFLYAAIPLGAAIGALT). Residues 278-287 (SGKLAHSVRP) lie on the Cytoplasmic side of the membrane. The chain crosses the membrane as a helical span at residues 288 to 307 (GLLMLLSTLGAFLAIGLFGL). Topologically, residues 308 to 313 (MPMWIL) are periplasmic. The chain crosses the membrane as a helical span at residues 314 to 336 (GVVCLALFGWLSAVSSLLQYTML). At 337 to 356 (QTQTPEAMLGRINGLWTAQN) the chain is on the cytoplasmic side. Residues 357–377 (VTGDAIGAALLGGLGAMMTPV) form a helical membrane-spanning segment. Residue A378 is a topological domain, periplasmic. A helical transmembrane segment spans residues 379–399 (SASASGFGLLIIGVLLLLVLV). The Cytoplasmic segment spans residues 400-416 (ELRRFRQTPPQVTASDS).

This sequence belongs to the major facilitator superfamily. EntS (TC 2.A.1.38) family.

It is found in the cell inner membrane. In terms of biological role, component of an export pathway for enterobactin. The chain is Enterobactin exporter EntS from Escherichia coli O6:H1 (strain CFT073 / ATCC 700928 / UPEC).